A 336-amino-acid polypeptide reads, in one-letter code: Inositol 2-dehydrogenase (336 aa).

Belongs to the Gfo/Idh/MocA family. As to quaternary structure, homotetramer.

The enzyme catalyses myo-inositol + NAD(+) = scyllo-inosose + NADH + H(+). In terms of biological role, involved in the oxidation of myo-inositol (MI) to 2-keto-myo-inositol (2KMI or 2-inosose). This chain is Inositol 2-dehydrogenase, found in Agrobacterium fabrum (strain C58 / ATCC 33970) (Agrobacterium tumefaciens (strain C58)).